A 244-amino-acid chain; its full sequence is tRNA (guanine-N(1)-)-methyltransferase (244 aa).

S-adenosyl-L-methionine is bound by residues glycine 123 and 143 to 148; that span reads LGDFVM.

The protein belongs to the RNA methyltransferase TrmD family. In terms of assembly, homodimer.

The protein localises to the cytoplasm. It carries out the reaction guanosine(37) in tRNA + S-adenosyl-L-methionine = N(1)-methylguanosine(37) in tRNA + S-adenosyl-L-homocysteine + H(+). Its function is as follows. Specifically methylates guanosine-37 in various tRNAs. This is tRNA (guanine-N(1)-)-methyltransferase from Ruegeria sp. (strain TM1040) (Silicibacter sp.).